A 589-amino-acid polypeptide reads, in one-letter code: Aspartate--tRNA(Asp/Asn) ligase (589 aa).

Glutamate 176 contacts L-aspartate. Residues 200 to 203 (QLFK) form an aspartate region. Arginine 222 provides a ligand contact to L-aspartate. ATP is bound by residues 222 to 224 (RDE) and glutamine 231. Histidine 450 contacts L-aspartate. An ATP-binding site is contributed by glutamate 484. Position 491 (arginine 491) interacts with L-aspartate. Residue 536–539 (GLDR) coordinates ATP.

It belongs to the class-II aminoacyl-tRNA synthetase family. Type 1 subfamily. Homodimer.

It localises to the cytoplasm. It carries out the reaction tRNA(Asx) + L-aspartate + ATP = L-aspartyl-tRNA(Asx) + AMP + diphosphate. Functionally, aspartyl-tRNA synthetase with relaxed tRNA specificity since it is able to aspartylate not only its cognate tRNA(Asp) but also tRNA(Asn). Reaction proceeds in two steps: L-aspartate is first activated by ATP to form Asp-AMP and then transferred to the acceptor end of tRNA(Asp/Asn). The sequence is that of Aspartate--tRNA(Asp/Asn) ligase from Bacillus cytotoxicus (strain DSM 22905 / CIP 110041 / 391-98 / NVH 391-98).